The sequence spans 546 residues: 2-succinyl-5-enolpyruvyl-6-hydroxy-3-cyclohexene-1-carboxylate synthase (546 aa).

Belongs to the TPP enzyme family. MenD subfamily. Homodimer. The cofactor is Mg(2+). It depends on Mn(2+) as a cofactor. Requires thiamine diphosphate as cofactor.

The catalysed reaction is isochorismate + 2-oxoglutarate + H(+) = 5-enolpyruvoyl-6-hydroxy-2-succinyl-cyclohex-3-ene-1-carboxylate + CO2. Its pathway is quinol/quinone metabolism; 1,4-dihydroxy-2-naphthoate biosynthesis; 1,4-dihydroxy-2-naphthoate from chorismate: step 2/7. It participates in quinol/quinone metabolism; menaquinone biosynthesis. In terms of biological role, catalyzes the thiamine diphosphate-dependent decarboxylation of 2-oxoglutarate and the subsequent addition of the resulting succinic semialdehyde-thiamine pyrophosphate anion to isochorismate to yield 2-succinyl-5-enolpyruvyl-6-hydroxy-3-cyclohexene-1-carboxylate (SEPHCHC). In Mycolicibacterium smegmatis (strain ATCC 700084 / mc(2)155) (Mycobacterium smegmatis), this protein is 2-succinyl-5-enolpyruvyl-6-hydroxy-3-cyclohexene-1-carboxylate synthase.